The sequence spans 464 residues: MAMTAGTTTTFPMSNHTRERVTVAKLTLENFYSNLILQHEERETRQKKLEVAMEEEGLADEEKKLRRSQHARKETEFLRLKRTRLGLDDFESLKVIGRGAFGEVRLVQKKDTGHIYAMKILRKSDMLEKEQVAHIRAERDILVEADGAWVVKMFYSFQDKRNLYLIMEFLPGGDMMTLLMKKDTLTEEETQFYISETVLAIDAIHQLGFIHRDIKPDNLLLDAKGHVKLSDFGLCTGLKKAHRTEFYRNLTHNPPSDFSFQNMNSKRKAETWKKNRRQLAYSTVGTPDYIAPEVFMQTGYNKLCDWWSLGVIMYEMLIGYPPFCSETPQETYRKVMNWKETLVFPPEVPISEKAKDLILRFCIDSENRIGNSGVEEIKGHPFFEGVDWEHIRERPAAIPIEIKSIDDTSNFDDFPESDILQPVPNTTEPDYKSKDWVFLNYTYKRFEGLTQRGSIPTYMKAGKL.

The residue at position 2 (Ala2) is an N-acetylalanine. Residues 63–88 (KKLRRSQHARKETEFLRLKRTRLGLD) form an S100B binding region. Residue Thr75 is modified to Phosphothreonine. The Protein kinase domain occupies 90–383 (FESLKVIGRG…VEEIKGHPFF (294 aa)). ATP is bound by residues 96–104 (IGRGAFGEV) and Lys119. Asp213 (proton acceptor) is an active-site residue. Ser282 is subject to Phosphoserine; by autocatalysis. Positions 384–453 (EGVDWEHIRE…KRFEGLTQRG (70 aa)) constitute an AGC-kinase C-terminal domain. Thr442 carries the phosphothreonine; by STK24/MST3 modification.

Belongs to the protein kinase superfamily. AGC Ser/Thr protein kinase family. In terms of assembly, homodimeric S100B binds two molecules of STK38L. Interacts with MICAL1; leading to inhibit the protein kinase activity by antagonizing activation by MST1/STK4. Interacts with MOB1 and MOB2. Requires Mg(2+) as cofactor. Ubiquitously expressed with highest levels observed in the thymus.

The protein resides in the cytoplasm. It is found in the cytoskeleton. Its subcellular location is the membrane. The catalysed reaction is L-seryl-[protein] + ATP = O-phospho-L-seryl-[protein] + ADP + H(+). It catalyses the reaction L-threonyl-[protein] + ATP = O-phospho-L-threonyl-[protein] + ADP + H(+). With respect to regulation, activated by binding of S100B which releases autoinhibitory N-lobe interactions, enabling ATP to bind and the autophosphorylation of Ser-282. Thr-442 then undergoes calcium-dependent phosphorylation by STK24/MST3. Interactions between phosphorylated Thr-442 and the N-lobe promote additional structural changes that complete the activation of the kinase. Autoinhibition is also released by the binding of MOB1/MOBKL1A and MOB2/HCCA2 to the N-terminal of STK38L. Functionally, involved in the regulation of structural processes in differentiating and mature neuronal cells. In Homo sapiens (Human), this protein is Serine/threonine-protein kinase 38-like.